A 138-amino-acid chain; its full sequence is Invertebrate-type lysozyme 6 (138 aa).

The first 18 residues, 1–18, serve as a signal peptide directing secretion; it reads MFVKLCGILAFAVTYASS. An I-type lysozyme domain is found at 19–138; it reads DCLQCICKKE…WNGIKGLGCS (120 aa). Intrachain disulfides connect Cys-20–Cys-106, Cys-25–Cys-31, Cys-36–Cys-45, Cys-58–Cys-86, Cys-76–Cys-82, and Cys-98–Cys-120. Catalysis depends on Glu-28, which acts as the Proton donor. The Nucleophile role is filled by Asp-39. 51–57 contacts substrate; it reads KLSYYKD. Substrate-binding positions include Tyr-90 and 113-115; that span reads HNG.

Belongs to the glycosyl hydrolase 22 family. Type-I lysozyme subfamily. In terms of tissue distribution, expressed in pharyngeal gland cells and duct projections, coelomocytes and intestine.

It carries out the reaction Hydrolysis of (1-&gt;4)-beta-linkages between N-acetylmuramic acid and N-acetyl-D-glucosamine residues in a peptidoglycan and between N-acetyl-D-glucosamine residues in chitodextrins.. In terms of biological role, has bacteriolytic activity against Gram-positive bacteria. This Caenorhabditis elegans protein is Invertebrate-type lysozyme 6.